We begin with the raw amino-acid sequence, 474 residues long: UDP-N-acetylmuramate--L-alanine ligase (474 aa).

108–114 (GTHGKTT) contacts ATP.

This sequence belongs to the MurCDEF family.

It is found in the cytoplasm. It catalyses the reaction UDP-N-acetyl-alpha-D-muramate + L-alanine + ATP = UDP-N-acetyl-alpha-D-muramoyl-L-alanine + ADP + phosphate + H(+). Its pathway is cell wall biogenesis; peptidoglycan biosynthesis. In terms of biological role, cell wall formation. This is UDP-N-acetylmuramate--L-alanine ligase from Chloroflexus aggregans (strain MD-66 / DSM 9485).